A 195-amino-acid polypeptide reads, in one-letter code: ATP-dependent Clp protease proteolytic subunit (195 aa).

Residue serine 97 is the Nucleophile of the active site. The active site involves histidine 122.

Belongs to the peptidase S14 family. In terms of assembly, fourteen ClpP subunits assemble into 2 heptameric rings which stack back to back to give a disk-like structure with a central cavity, resembling the structure of eukaryotic proteasomes.

The protein localises to the cytoplasm. It carries out the reaction Hydrolysis of proteins to small peptides in the presence of ATP and magnesium. alpha-casein is the usual test substrate. In the absence of ATP, only oligopeptides shorter than five residues are hydrolyzed (such as succinyl-Leu-Tyr-|-NHMec, and Leu-Tyr-Leu-|-Tyr-Trp, in which cleavage of the -Tyr-|-Leu- and -Tyr-|-Trp bonds also occurs).. Its function is as follows. Cleaves peptides in various proteins in a process that requires ATP hydrolysis. Has a chymotrypsin-like activity. Plays a major role in the degradation of misfolded proteins. This Lactobacillus gasseri (strain ATCC 33323 / DSM 20243 / BCRC 14619 / CIP 102991 / JCM 1131 / KCTC 3163 / NCIMB 11718 / NCTC 13722 / AM63) protein is ATP-dependent Clp protease proteolytic subunit.